Consider the following 180-residue polypeptide: Adenine phosphoribosyltransferase (180 aa).

N-acetylserine is present on Ser2. Ser15 and Ser30 each carry phosphoserine. Tyr60 bears the Phosphotyrosine mark. At Ser66 the chain carries Phosphoserine. Lys114 bears the N6-acetyllysine mark. Phosphothreonine is present on Thr135.

The protein belongs to the purine/pyrimidine phosphoribosyltransferase family. Homodimer.

It localises to the cytoplasm. It catalyses the reaction AMP + diphosphate = 5-phospho-alpha-D-ribose 1-diphosphate + adenine. It participates in purine metabolism; AMP biosynthesis via salvage pathway; AMP from adenine: step 1/1. Its function is as follows. Catalyzes a salvage reaction resulting in the formation of AMP, that is energically less costly than de novo synthesis. The polypeptide is Adenine phosphoribosyltransferase (Mus musculus (Mouse)).